The primary structure comprises 498 residues: Archaemetzincin-1 (498 aa).

H261 contacts Zn(2+). The active-site Proton acceptor is E262. 5 residues coordinate Zn(2+): H265, C272, C277, C296, and C299. The interval 332-381 (QEAGEPSVWEDTPPASADSGMCCESDSEPGTSVSEPLTPDAGSHTFASGP) is disordered.

It belongs to the peptidase M54 family. Zn(2+) is required as a cofactor.

Functionally, probable zinc metalloprotease. This Homo sapiens (Human) protein is Archaemetzincin-1 (AMZ1).